A 202-amino-acid polypeptide reads, in one-letter code: Histone chaperone ASF1B (202 aa).

The interval 1-156 (MAKVSVLNVA…TRFHINWDNN (156 aa)) is interaction with histone H3 and CHAF1B. Ser198 is subject to Phosphoserine; by TLK2.

Belongs to the ASF1 family. In terms of assembly, interacts with histone H3 (via C-terminus), including histone H3.1, H3.2 and H3.3, and histone H4; the interaction with H3 is direct. Interacts with the CHAF1A, CHAF1B and RBBP4 subunits of the CAF-1 complex. Interacts with HAT1, NASP and TAF1. Found in a soluble complex with NASP and histones H3 and H4; the interaction with NASP is probably indirect and mediated by H3-H4. Interacts with CDAN1. Found in a cytosolic complex with CDAN1, ASF1A, IPO4 and histones H3.1 and H4. Interacts with CREBBP. In terms of processing, phosphorylated by TLK1 and TLK2.

It localises to the nucleus. The protein localises to the cytoplasm. Its subcellular location is the cytosol. In terms of biological role, histone chaperone that facilitates histone deposition and histone exchange and removal during nucleosome assembly and disassembly. Cooperates with chromatin assembly factor 1 (CAF-1) to promote replication-dependent chromatin assembly. Also involved in the nuclear import of the histone H3-H4 dimer together with importin-4 (IPO4): specifically recognizes and binds newly synthesized histones with the monomethylation of H3 'Lys-9' (H3K9me1) and diacetylation at 'Lys-5' and 'Lys-12' of H4 (H4K5ac and H4K12ac) marks in the cytosol. Does not participate in replication-independent nucleosome deposition which is mediated by ASF1A and HIRA. Required for gonad development. The protein is Histone chaperone ASF1B (ASF1B) of Bos taurus (Bovine).